A 238-amino-acid chain; its full sequence is Ribonuclease Rh (238 aa).

Positions 1 to 16 are cleaved as a signal peptide; it reads MKAVLALATLIGSTLA. 5 cysteine pairs are disulfide-bonded: C19–C36, C26–C69, C35–C136, C79–C128, and C198–C229. Catalysis depends on residues H62, E121, and H125.

This sequence belongs to the RNase T2 family.

It carries out the reaction a ribonucleotidyl-ribonucleotide-RNA + H2O = a 3'-end 3'-phospho-ribonucleotide-RNA + a 5'-end dephospho-ribonucleoside-RNA + H(+). Its function is as follows. This is a base non-specific ribonuclease. The protein is Ribonuclease Rh of Rhizopus niveus.